Consider the following 313-residue polypeptide: Glyoxylate/hydroxypyruvate reductase A (313 aa).

Residue Arg-228 is part of the active site. Residue His-276 is the Proton donor of the active site.

This sequence belongs to the D-isomer specific 2-hydroxyacid dehydrogenase family. GhrA subfamily.

Its subcellular location is the cytoplasm. It carries out the reaction glycolate + NADP(+) = glyoxylate + NADPH + H(+). The catalysed reaction is (R)-glycerate + NAD(+) = 3-hydroxypyruvate + NADH + H(+). The enzyme catalyses (R)-glycerate + NADP(+) = 3-hydroxypyruvate + NADPH + H(+). In terms of biological role, catalyzes the NADPH-dependent reduction of glyoxylate and hydroxypyruvate into glycolate and glycerate, respectively. The polypeptide is Glyoxylate/hydroxypyruvate reductase A (Yersinia enterocolitica serotype O:8 / biotype 1B (strain NCTC 13174 / 8081)).